Reading from the N-terminus, the 382-residue chain is Putative 12-oxophytodienoate reductase 3 (382 aa).

FMN contacts are provided by residues P37–T39, A70, and Q112. Positions S120–Q138 are enriched in polar residues. Residues S120 to V147 form a disordered region. H184 to H187 contributes to the substrate binding site. The active-site Proton donor is Y189. FMN is bound at residue R236. R277 contributes to the substrate binding site. Residues G307 and G328–R329 contribute to the FMN site.

It belongs to the NADH:flavin oxidoreductase/NADH oxidase family. Requires FMN as cofactor.

Functionally, putative oxophytodienoate reductase that may be involved in the biosynthesis or metabolism of oxylipin signaling molecules. The polypeptide is Putative 12-oxophytodienoate reductase 3 (OPR3) (Oryza sativa subsp. japonica (Rice)).